The sequence spans 865 residues: Xylosyltransferase 2 (865 aa).

Over 1-15 (MVASARVQKLVRRYK) the chain is Cytoplasmic. The helical; Signal-anchor for type II membrane protein transmembrane segment at 16–36 (LAIATALAILLLQGLVVWSFS) threads the bilayer. The Lumenal segment spans residues 37 to 865 (GLEEDEAGEK…GPVKADGRLR (829 aa)). A disordered region spans residues 41–157 (DEAGEKGRQR…EGAPQPTDNG (117 aa)). The segment covering 53-65 (RPLDPGEGSKDTD) has biased composition (basic and acidic residues). A compositionally biased stretch (basic residues) spans 73 to 82 (STGRRHGRWR). N-linked (GlcNAc...) asparagine glycosylation is present at Asn122. Residues 125 to 137 (GAAAGEALVGAAG) are compositionally biased toward low complexity. Disulfide bonds link Cys162–Cys190, Cys206–Cys448, Cys467–Cys480, and Cys469–Cys478. UDP-alpha-D-xylose-binding positions include Val239, Asp267, and 296–298 (TIW). Asn327 is a glycosylation site (N-linked (GlcNAc...) asparagine). 400 to 401 (DW) contributes to the UDP-alpha-D-xylose binding site. Residues Ser481 and 504 to 505 (RK) each bind UDP-alpha-D-xylose. Intrachain disulfides connect Cys581/Cys833 and Cys826/Cys839. An N-linked (GlcNAc...) asparagine glycan is attached at Asn683. Positions 846-865 (SLSPDPKSELGPVKADGRLR) are disordered.

The protein belongs to the glycosyltransferase 14 family. XylT subfamily. As to quaternary structure, monomer. Mg(2+) is required as a cofactor. Requires Mn(2+) as cofactor. In terms of processing, contains disulfide bonds. Widely expressed. Expressed at higher level in kidney and pancreas.

It localises to the golgi apparatus membrane. Its subcellular location is the secreted. The catalysed reaction is UDP-alpha-D-xylose + L-seryl-[protein] = 3-O-(beta-D-xylosyl)-L-seryl-[protein] + UDP + H(+). It participates in glycan metabolism; chondroitin sulfate biosynthesis. It functions in the pathway glycan metabolism; heparan sulfate biosynthesis. Its function is as follows. Catalyzes the first step in the biosynthesis of chondroitin sulfate, heparan sulfate and dermatan sulfate proteoglycans, such as DCN. Transfers D-xylose from UDP-D-xylose to specific serine residues of the core protein. This Homo sapiens (Human) protein is Xylosyltransferase 2 (XYLT2).